The following is a 365-amino-acid chain: MSDEIVTNKSVTYVNNTTPVTITSSELDLRSCYQDDEVVIEVHAAALNPIDFITHQLCNSYIFGKYPKTYSRDYSGVIIKAGKDVDNRWKVGDKVNGMYSHIYGERGTLTHYLILNPAKDIPITHMVEVPKDENDPYDDFVYAAAWPLTFGTAFSTLYDFKKDWTSDSKVLVIGASTSVSYAFVHIAKNYFNIGTVVGICSKNSIERNKKLGYDYLVPYDEGSIVENVKKLKQIVLENDKFDMIFDSVGNHDFFPVIDQFLKPKAKNSFYVTIAGNNKANYKNISWRDFVSLSSILKAINPFKKYNWRFGHPYPPNNFIEVGNEMIKKGTYKPPIDSVYEFDQYKEAIDRLMSNRAKGKVVVKMK.

Belongs to the YIM1 family.

It is found in the lipid droplet. It localises to the mitochondrion. The polypeptide is Protein YIM1 (YIM1) (Saccharomyces cerevisiae (strain RM11-1a) (Baker's yeast)).